The following is a 580-amino-acid chain: Amino-acid acetyltransferase, mitochondrial (580 aa).

In terms of domain architecture, N-acetyltransferase spans leucine 403–aspartate 560.

It belongs to the acetyltransferase family.

It localises to the mitochondrion. The enzyme catalyses L-glutamate + acetyl-CoA = N-acetyl-L-glutamate + CoA + H(+). The protein operates within amino-acid biosynthesis; L-arginine biosynthesis; N(2)-acetyl-L-ornithine from L-glutamate: step 1/4. N-acetylglutamate synthase involved in arginine biosynthesis. The polypeptide is Amino-acid acetyltransferase, mitochondrial (ARG2) (Candida albicans (strain SC5314 / ATCC MYA-2876) (Yeast)).